The following is a 512-amino-acid chain: D-alanine--D-alanyl carrier protein ligase (512 aa).

152–153 provides a ligand contact to ATP; the sequence is TS. Aspartate 199 is a binding site for D-alanine. 294 to 299 contributes to the ATP binding site; that stretch reads NAYGPT. Residue valine 303 participates in D-alanine binding. Residues aspartate 385, 397-400, and lysine 499 each bind ATP; that span reads YGGR. Lysine 499 lines the D-alanine pocket.

The protein belongs to the ATP-dependent AMP-binding enzyme family. DltA subfamily.

The protein localises to the cytoplasm. The enzyme catalyses holo-[D-alanyl-carrier protein] + D-alanine + ATP = D-alanyl-[D-alanyl-carrier protein] + AMP + diphosphate. The protein operates within cell wall biogenesis; lipoteichoic acid biosynthesis. Functionally, catalyzes the first step in the D-alanylation of lipoteichoic acid (LTA), the activation of D-alanine and its transfer onto the D-alanyl carrier protein (Dcp) DltC. In an ATP-dependent two-step reaction, forms a high energy D-alanyl-AMP intermediate, followed by transfer of the D-alanyl residue as a thiol ester to the phosphopantheinyl prosthetic group of the Dcp. D-alanylation of LTA plays an important role in modulating the properties of the cell wall in Gram-positive bacteria, influencing the net charge of the cell wall. This chain is D-alanine--D-alanyl carrier protein ligase, found in Streptococcus pyogenes serotype M3 (strain SSI-1).